Consider the following 263-residue polypeptide: Lens fiber major intrinsic protein (263 aa).

The Cytoplasmic portion of the chain corresponds to 1–9 (MWELRSASF). The helical transmembrane segment at 10–29 (WRAIFAEFFATLFYVFFGLG) threads the bilayer. Residues 30–41 (ASLRWAPGPLHV) lie on the Extracellular side of the membrane. Residues 42–59 (LQVALAFGLALATLVQTV) traverse the membrane as a helical segment. The Cytoplasmic segment spans residues 60–61 (GH). The discontinuously helical intramembrane region spans 62 to 77 (ISGAHVNPAVTFAFLV). The short motif at 68 to 70 (NPA) is the NPA 1 element. Topologically, residues 78–82 (GSQMS) are cytoplasmic. The chain crosses the membrane as a helical span at residues 83–106 (LLRAFCYIAAQLLGAVAGAAVLYS). The Extracellular portion of the chain corresponds to 107–127 (VTPPAVRGNLALNTLHAGVSV). A helical transmembrane segment spans residues 128 to 148 (GQATTVEIFLTLQFVLCIFAT). Topologically, residues 149–156 (YDERRNGR) are cytoplasmic. A helical membrane pass occupies residues 157 to 175 (MGSVALAVGFSLTLGHLFG). The Extracellular segment spans residues 176 to 178 (MYY). An intramembrane region (discontinuously helical) is located at residues 179–193 (TGAGMNPARSFAPAI). The short motif at 184–186 (NPA) is the NPA 2 element. At 194 to 200 (LTRNFSN) the chain is on the extracellular side. Residues 201 to 222 (HWVYWVGPIIGGGLGSLLYDFL) form a helical membrane-spanning segment. The Cytoplasmic segment spans residues 223–263 (LFPRLKSVSERLSILKGARPSDSNGQPEGTGEPVELKTQAL). An interaction with CALM region spans residues 227–237 (LKSVSERLSIL). Residues S235, S243, and S245 each carry the phosphoserine modification. A disordered region spans residues 240-263 (ARPSDSNGQPEGTGEPVELKTQAL). A Deamidated asparagine modification is found at N246.

It belongs to the MIP/aquaporin (TC 1.A.8) family. In terms of assembly, homotetramer; each monomer provides an independent water pore. Two homotetramers on opposing membranes can dimerize, forming a cell-cell junction. Interacts with CALM; the calcium-calmodulin/CALM complex interacts with the cytoplasmic domains of two aquaporins, leading to channel closure. Interacts with BFSP1 (via C-terminus); prevents calcium-dependent inhibition of the water channel activity. In terms of processing, subject to partial proteolytic cleavage in the eye lens core. Partial proteolysis promotes interactions between tetramers from adjoining membranes. Fatty acylated at Met-1 and Lys-238. The acyl modifications, in decreasing order of ion abundance, are: oleoyl (C18:1) &gt; palmitoyl (C16:0) &gt; stearoyl (C18:0) &gt; eicosenoyl (C20:1) &gt; dihomo-gamma-linolenoyl (C20:3) &gt; palmitoleoyl (C16:1) &gt; eicosadienoyl (C20:2).

Its subcellular location is the cell membrane. The protein resides in the cell junction. The catalysed reaction is H2O(in) = H2O(out). With respect to regulation, the water channel activity is inhibited by calcium through calmodulin/CALM. Its function is as follows. Aquaporins form homotetrameric transmembrane channels, with each monomer independently mediating water transport across the plasma membrane along its osmotic gradient. Specifically expressed in lens fiber cells, this aquaporin is crucial for maintaining lens water homeostasis and transparency. Beyond water permeability, it also acts as a cell-to-cell adhesion molecule, forming thin junctions between lens fiber cells that are essential for maintaining the ordered structure and transparency of the lens. The sequence is that of Lens fiber major intrinsic protein from Mus musculus (Mouse).